The primary structure comprises 644 residues: Zinc finger protein 74 (644 aa).

Residues 43 to 114 (VSFKDVAVDF…QREVPRGPCP (72 aa)) form the KRAB domain. C2H2-type zinc fingers lie at residues 248 to 270 (FVCG…RRWH), 276 to 298 (YKCD…RRIH), 304 to 326 (FFCG…QRIH), 332 to 354 (YKCS…LRVH), 360 to 382 (YRCG…HRIH), 388 to 410 (YQCG…EKIH), 416 to 438 (FKCS…QRTH), 444 to 466 (FKCA…RRIH), 472 to 494 (FKCN…RRIH), 500 to 522 (FDCS…QRIH), 528 to 550 (YKCS…QKIH), and 556 to 578 (FKCE…QRLH). A Glycyl lysine isopeptide (Lys-Gly) (interchain with G-Cter in SUMO2) cross-link involves residue Lys-582.

The protein belongs to the krueppel C2H2-type zinc-finger protein family. In terms of tissue distribution, highly expressed in the fetal brain.

Its subcellular location is the nucleus. In terms of biological role, may play a role in RNA metabolism. This is Zinc finger protein 74 (ZNF74) from Homo sapiens (Human).